The primary structure comprises 953 residues: MTQTLSQLEHHDAFIARHIGPSAPQQVHMLATVGSDSLAGLIAQIVPADIQLAAAPAVGEATTEAQALAELKAIARQNQRYKSFIGMGYSAVVTPPVILRNMLENPGWYTAYTPYQPEVSQGRLEALLNFQQLTLDLTGLDIASASLLDEATAAAEAMALAKRSSKLKQANCFFVADDVHPQTLDVLRTRAGTFGFELVIDKAQAALEHPDLFGVLLQQVGTTGELHDYRALMAELTRRKIISCVAADMLSLVLLAAPGEQGADVVFGSSQRFGVPMGYGGPHAAFFAARDEMKRAMPGRIIGVSRDAAGDTALRMVMQTREQHIRREKANSNICTSQVLLANIAGLYAVYHGPQGLKRIAGRIHRLTTILAQGLHDADLTLRHDRWFDTLTVEVVDKAGVLARANAAGINLRSDIHGAVGITLDETTVREDVQTLWQVVTGAAGTLAIDALDAGCDEVIPPELLRATPILTHEVFNRYHSETEMMRYMHRLERKDLALNQAMIPLGSCTMKLNAAAEMIPITWPEFAELHPFCPPEQAAGYQQMIAQLSRWLIQLTGYDALCMQPNSGAQGEYAGLLAIRRYHESRNQGERHICLIPSSAHGTNPASAQMAGMSVTVVACDKNGNIDLHDLRAKAEQAGEQLSCIMVTYPSTHGVYEETIREVCQIVHQYGGQVYLDGANMNAQVGITSPGYIGADVSHLNLHKTFCIPHGGGGPGMGPIGVKAHLAPFVPGHLVVELDGVLTRQGAVSAAPFGSASILPISWMYIRMMGAEGLKQASQVAILNANYIATRLQQAYPVLYTGRAGRVAHECILDIRPLKEATGISEMDIAKRLIDYGFHAPTMSFPVAGTLMVEPTESESQLELDRFIDAMLAIRAEIQQVADGVWPASDNPLVNAPYTQRELAGEWRHPYDRQIAAFPAGYGDKYWPAVKRLDDVYGDRNLFCACVPLSDY.

At lysine 705 the chain carries N6-(pyridoxal phosphate)lysine.

Belongs to the GcvP family. In terms of assembly, the glycine cleavage system is composed of four proteins: P, T, L and H. The cofactor is pyridoxal 5'-phosphate.

The enzyme catalyses N(6)-[(R)-lipoyl]-L-lysyl-[glycine-cleavage complex H protein] + glycine + H(+) = N(6)-[(R)-S(8)-aminomethyldihydrolipoyl]-L-lysyl-[glycine-cleavage complex H protein] + CO2. In terms of biological role, the glycine cleavage system catalyzes the degradation of glycine. The P protein binds the alpha-amino group of glycine through its pyridoxal phosphate cofactor; CO(2) is released and the remaining methylamine moiety is then transferred to the lipoamide cofactor of the H protein. This is Glycine dehydrogenase (decarboxylating) from Sodalis glossinidius (strain morsitans).